The primary structure comprises 439 residues: ATP-dependent RNA helicase RhlB (439 aa).

Positions 9–37 (QKFADLPLHPEVKQALAENGFEFCTPIQA) match the Q motif motif. The region spanning 40 to 219 (LPVLLQSKDI…YDHMNDPVKV (180 aa)) is the Helicase ATP-binding domain. Residue 53-60 (AQTGTGKT) coordinates ATP. A DEAD box motif is present at residues 165-168 (DEAD). In terms of domain architecture, Helicase C-terminal spans 243 to 390 (KMRLLLTLIE…VSNYDSSALL (148 aa)). Residues 398-439 (KIPRKHPAGTRNLRERAGAGRPQGAHRSGGRPPRHDRTRRHS) form a disordered region. Positions 425–439 (SGGRPPRHDRTRRHS) are enriched in basic residues.

This sequence belongs to the DEAD box helicase family. RhlB subfamily. In terms of assembly, component of the RNA degradosome, which is a multiprotein complex involved in RNA processing and mRNA degradation.

Its subcellular location is the cytoplasm. It carries out the reaction ATP + H2O = ADP + phosphate + H(+). DEAD-box RNA helicase involved in RNA degradation. Has RNA-dependent ATPase activity and unwinds double-stranded RNA. This chain is ATP-dependent RNA helicase RhlB, found in Shewanella putrefaciens (strain CN-32 / ATCC BAA-453).